The following is a 428-amino-acid chain: Glutamine synthetase, chloroplastic (428 aa).

Residues 1–49 (MAQILAASPTCQMRLTKPSSIASSKLWNSVVLKQKKQSSSKVRSFKVMA) constitute a chloroplast transit peptide. Residues 75–155 (IIAEYIWIGG…VICDTYTPAG (81 aa)) enclose the GS beta-grasp domain. The segment at 94-120 (RTLEKPVEDPSELPKWNYDGSSTGQAP) is disordered. A Phosphoserine modification is found at serine 104. The GS catalytic domain occupies 159 to 428 (PTNKRARAAE…LAAQKLSLKV (270 aa)).

It belongs to the glutamine synthetase family. As to quaternary structure, homooctamer.

The protein localises to the plastid. It localises to the chloroplast. It catalyses the reaction L-glutamate + NH4(+) + ATP = L-glutamine + ADP + phosphate + H(+). Its function is as follows. The light-modulated chloroplast enzyme, encoded by a nuclear gene and expressed primarily in leaves, is responsible for the reassimilation of the ammonia generated by photorespiration. This chain is Glutamine synthetase, chloroplastic (GLN2), found in Brassica napus (Rape).